The primary structure comprises 191 residues: Large ribosomal subunit protein uL29m (191 aa).

It belongs to the universal ribosomal protein uL29 family. As to quaternary structure, component of the mitochondrial large ribosomal subunit. Mature mitochondrial ribosomes consist of a small (37S) and a large (54S) subunit. The 37S subunit contains at least 33 different proteins and 1 molecule of RNA (15S). The 54S subunit contains at least 45 different proteins and 1 molecule of RNA (21S).

It localises to the mitochondrion. This Sclerotinia sclerotiorum (strain ATCC 18683 / 1980 / Ss-1) (White mold) protein is Large ribosomal subunit protein uL29m (MRPL4).